Here is a 191-residue protein sequence, read N- to C-terminus: Molybdenum cofactor guanylyltransferase (191 aa).

GTP-binding positions include 13 to 15 (LAG), Lys26, Asp72, and Asp102. Asp102 is a binding site for Mg(2+).

It belongs to the MobA family. As to quaternary structure, monomer. Mg(2+) is required as a cofactor.

It localises to the cytoplasm. The catalysed reaction is Mo-molybdopterin + GTP + H(+) = Mo-molybdopterin guanine dinucleotide + diphosphate. Transfers a GMP moiety from GTP to Mo-molybdopterin (Mo-MPT) cofactor (Moco or molybdenum cofactor) to form Mo-molybdopterin guanine dinucleotide (Mo-MGD) cofactor. This is Molybdenum cofactor guanylyltransferase from Pseudomonas putida (strain GB-1).